Reading from the N-terminus, the 607-residue chain is Elongation factor 4 (607 aa).

Residues 11 to 193 enclose the tr-type G domain; the sequence is SRIRNFSIIA…QVVEKVPAPA (183 aa). Residues 23–28 and 140–143 each bind GTP; these read DHGKST and NKID.

The protein belongs to the TRAFAC class translation factor GTPase superfamily. Classic translation factor GTPase family. LepA subfamily.

It localises to the cell membrane. It catalyses the reaction GTP + H2O = GDP + phosphate + H(+). Its function is as follows. Required for accurate and efficient protein synthesis under certain stress conditions. May act as a fidelity factor of the translation reaction, by catalyzing a one-codon backward translocation of tRNAs on improperly translocated ribosomes. Back-translocation proceeds from a post-translocation (POST) complex to a pre-translocation (PRE) complex, thus giving elongation factor G a second chance to translocate the tRNAs correctly. Binds to ribosomes in a GTP-dependent manner. This Shouchella clausii (strain KSM-K16) (Alkalihalobacillus clausii) protein is Elongation factor 4.